The following is a 204-amino-acid chain: MSVIEKLIKPAHLIDMRDIIREGNPTLRAVAEEVSFPLADEDILLGEKMMQFLHNSQDPVMAEKLGLRGGVGLAAPQLDISRRIIAVLLPNPEDENGNSPQEAYALKEVMYNPKIVAHSVQDAALADGEGCLSVDRDVPGYVVRHARVTVDYFDKNGEKHRVKLKGYKAIVVQHEIDHINGIMFYDRINETDPFAIKEGMLILE.

The Fe cation site is built by Cys131 and His174. The active site involves Glu175. Fe cation is bound at residue His178.

This sequence belongs to the polypeptide deformylase family. The cofactor is Fe(2+).

The catalysed reaction is N-terminal N-formyl-L-methionyl-[peptide] + H2O = N-terminal L-methionyl-[peptide] + formate. Functionally, removes the formyl group from the N-terminal Met of newly synthesized proteins. Requires at least a dipeptide for an efficient rate of reaction. N-terminal L-methionine is a prerequisite for activity but the enzyme has broad specificity at other positions. The polypeptide is Peptide deformylase (Streptococcus gordonii (strain Challis / ATCC 35105 / BCRC 15272 / CH1 / DL1 / V288)).